A 116-amino-acid chain; its full sequence is Iron-sulfur cluster insertion protein ErpA (116 aa).

Iron-sulfur cluster is bound by residues C44, C108, and C110.

It belongs to the HesB/IscA family. Homodimer. It depends on iron-sulfur cluster as a cofactor.

In terms of biological role, required for insertion of 4Fe-4S clusters for at least IspG. This Shewanella halifaxensis (strain HAW-EB4) protein is Iron-sulfur cluster insertion protein ErpA.